The following is a 456-amino-acid chain: Bifunctional protein GlmU (456 aa).

Positions 1-229 (MLNNAMSVVI…LSEVEGVNNR (229 aa)) are pyrophosphorylase. UDP-N-acetyl-alpha-D-glucosamine is bound by residues 11–14 (LAAG), lysine 25, glutamine 76, 81–82 (GT), 103–105 (YGD), glycine 140, glutamate 154, asparagine 169, and asparagine 227. Aspartate 105 is a binding site for Mg(2+). Asparagine 227 provides a ligand contact to Mg(2+). The interval 230 to 250 (LQLSRLERVYQSEQAEKLLLA) is linker. The segment at 251-456 (GVMLRDPARF…EGWRRPVKKK (206 aa)) is N-acetyltransferase. Residues arginine 333 and lysine 351 each contribute to the UDP-N-acetyl-alpha-D-glucosamine site. Histidine 363 functions as the Proton acceptor in the catalytic mechanism. UDP-N-acetyl-alpha-D-glucosamine-binding residues include tyrosine 366 and asparagine 377. Residues alanine 380, 386–387 (NY), serine 405, alanine 423, and arginine 440 contribute to the acetyl-CoA site.

It in the N-terminal section; belongs to the N-acetylglucosamine-1-phosphate uridyltransferase family. This sequence in the C-terminal section; belongs to the transferase hexapeptide repeat family. In terms of assembly, homotrimer. The cofactor is Mg(2+).

It localises to the cytoplasm. It catalyses the reaction alpha-D-glucosamine 1-phosphate + acetyl-CoA = N-acetyl-alpha-D-glucosamine 1-phosphate + CoA + H(+). It carries out the reaction N-acetyl-alpha-D-glucosamine 1-phosphate + UTP + H(+) = UDP-N-acetyl-alpha-D-glucosamine + diphosphate. It functions in the pathway nucleotide-sugar biosynthesis; UDP-N-acetyl-alpha-D-glucosamine biosynthesis; N-acetyl-alpha-D-glucosamine 1-phosphate from alpha-D-glucosamine 6-phosphate (route II): step 2/2. It participates in nucleotide-sugar biosynthesis; UDP-N-acetyl-alpha-D-glucosamine biosynthesis; UDP-N-acetyl-alpha-D-glucosamine from N-acetyl-alpha-D-glucosamine 1-phosphate: step 1/1. The protein operates within bacterial outer membrane biogenesis; LPS lipid A biosynthesis. Catalyzes the last two sequential reactions in the de novo biosynthetic pathway for UDP-N-acetylglucosamine (UDP-GlcNAc). The C-terminal domain catalyzes the transfer of acetyl group from acetyl coenzyme A to glucosamine-1-phosphate (GlcN-1-P) to produce N-acetylglucosamine-1-phosphate (GlcNAc-1-P), which is converted into UDP-GlcNAc by the transfer of uridine 5-monophosphate (from uridine 5-triphosphate), a reaction catalyzed by the N-terminal domain. This Escherichia coli O157:H7 (strain EC4115 / EHEC) protein is Bifunctional protein GlmU.